The primary structure comprises 473 residues: ATP synthase subunit beta (473 aa).

Residue 158 to 165 (GGAGVGKT) coordinates ATP.

It belongs to the ATPase alpha/beta chains family. F-type ATPases have 2 components, CF(1) - the catalytic core - and CF(0) - the membrane proton channel. CF(1) has five subunits: alpha(3), beta(3), gamma(1), delta(1), epsilon(1). CF(0) has three main subunits: a(1), b(2) and c(9-12). The alpha and beta chains form an alternating ring which encloses part of the gamma chain. CF(1) is attached to CF(0) by a central stalk formed by the gamma and epsilon chains, while a peripheral stalk is formed by the delta and b chains.

It is found in the cell membrane. It catalyses the reaction ATP + H2O + 4 H(+)(in) = ADP + phosphate + 5 H(+)(out). Produces ATP from ADP in the presence of a proton gradient across the membrane. The catalytic sites are hosted primarily by the beta subunits. This is ATP synthase subunit beta from Geobacillus sp. (strain WCH70).